The following is a 205-amino-acid chain: Lymphotoxin-alpha (205 aa).

A signal peptide spans 1-34 (MTPPERLFLSRVRGTPLHLLLLGLLLVLLPGAQG). T41 is a glycosylation site (O-linked (GalNAc...) threonine). Residues 63-205 (PAAHLIGDPS…STVFFGAFAL (143 aa)) form the THD domain. N96 carries an N-linked (GlcNAc...) asparagine glycan.

This sequence belongs to the tumor necrosis factor family. In terms of assembly, homotrimer, and heterotrimer of either two LTB and one LTA subunits or (less prevalent) two LTA and one LTB subunits. Interacts with TNFRSF14.

The protein resides in the secreted. It is found in the membrane. In terms of biological role, cytokine that in its homotrimeric form binds to TNFRSF1A/TNFR1, TNFRSF1B/TNFBR and TNFRSF14/HVEM. In its heterotrimeric form with LTB binds to TNFRSF3/LTBR. Lymphotoxin is produced by lymphocytes and is cytotoxic for a wide range of tumor cells in vitro and in vivo. The sequence is that of Lymphotoxin-alpha (LTA) from Macaca mulatta (Rhesus macaque).